The following is a 156-amino-acid chain: Ribosomal RNA large subunit methyltransferase H (156 aa).

Residues Leu73, Gly104, and 123-128 (IGPLTL) each bind S-adenosyl-L-methionine.

It belongs to the RNA methyltransferase RlmH family. Homodimer.

It localises to the cytoplasm. The enzyme catalyses pseudouridine(1915) in 23S rRNA + S-adenosyl-L-methionine = N(3)-methylpseudouridine(1915) in 23S rRNA + S-adenosyl-L-homocysteine + H(+). Functionally, specifically methylates the pseudouridine at position 1915 (m3Psi1915) in 23S rRNA. This Xanthomonas euvesicatoria pv. vesicatoria (strain 85-10) (Xanthomonas campestris pv. vesicatoria) protein is Ribosomal RNA large subunit methyltransferase H.